The sequence spans 214 residues: Alpha-S1-casein (214 aa).

Positions 1–15 are cleaved as a signal peptide; the sequence is MKLLILTCLVAVALA. Ser27 is subject to Phosphoserine; in allele A. A Phosphoserine; in allele C modification is found at Ser56. Residues Ser61 and Ser63 each carry the phosphoserine modification. Residues 69–91 are disordered; the sequence is MEDAKQMKAGSSSSSEEIVPNSA. The residue at position 79 (Ser79) is a Phosphoserine; in alleles A and C. Ser80 carries the post-translational modification Phosphoserine. The residue at position 81 (Ser81) is a Phosphoserine; in alleles A and C. Ser82 carries the post-translational modification Phosphoserine. Ser83 carries the phosphoserine; in alleles A and C modification. Phosphoserine is present on Ser90. Residues 105–111 are opioid-like peptide sequence; it reads RYLGYLE. Ser130 bears the Phosphoserine mark.

This sequence belongs to the alpha-casein family. In terms of tissue distribution, mammary gland specific. Secreted in milk.

It is found in the secreted. Its function is as follows. Important role in the capacity of milk to transport calcium phosphate. This Ovis aries (Sheep) protein is Alpha-S1-casein (CSN1S1).